A 545-amino-acid polypeptide reads, in one-letter code: Squalene monooxygenase SE2 (545 aa).

Residues Glu-12–Leu-32 traverse the membrane as a helical segment. FAD contacts are provided by residues Val-86–Ala-87, Glu-106–Arg-107, Arg-114, Arg-185, Val-201, Asp-364, and Met-377. 2 helical membrane passes run Leu-475–Pro-495 and Met-500–Ser-520.

It belongs to the squalene monooxygenase family. Requires FAD as cofactor. Weak expression in petioles and flower buds and barely detectable in roots and leaves. In petioles, preferentially observed in vascular bundle tissue (phloem cells and parenchymatous cells near xylem) and resin ducts.

It is found in the membrane. The enzyme catalyses squalene + reduced [NADPH--hemoprotein reductase] + O2 = (S)-2,3-epoxysqualene + oxidized [NADPH--hemoprotein reductase] + H2O + H(+). Its pathway is terpene metabolism; lanosterol biosynthesis; lanosterol from farnesyl diphosphate: step 2/3. Functionally, component of the triterpene saponins (e.g. ginsenosides or panaxosides) and phytosterols biosynthetic pathways. Catalyzes the first oxygenation step in sterol biosynthesis and is suggested to be one of the rate-limiting enzymes in this pathway. In Panax ginseng (Korean ginseng), this protein is Squalene monooxygenase SE2.